Here is a 48-residue protein sequence, read N- to C-terminus: Large ribosomal subunit protein eL40 (48 aa).

It belongs to the eukaryotic ribosomal protein eL40 family.

In Methanoregula boonei (strain DSM 21154 / JCM 14090 / 6A8), this protein is Large ribosomal subunit protein eL40.